Reading from the N-terminus, the 177-residue chain is uncharacterized protein (177 aa).

The span at 100–115 (QVQPHQQTHQQSQQTH) shows a compositional bias: low complexity. The disordered stretch occupies residues 100–135 (QVQPHQQTHQQSQQTHNKTVANSGDPPPPPPSQPNK). Residues 141–158 (WIVGMVIGVVVLYLLYRY) form a helical membrane-spanning segment.

It localises to the membrane. This is an uncharacterized protein from Aedes vexans (Inland floodwater mosquito).